A 617-amino-acid polypeptide reads, in one-letter code: Chaperone protein DnaK (617 aa).

The segment at 579-617 (KAQQEAQQASGEAGSADARGPDETVVDADYEVVDDEKRK) is disordered. Positions 580-594 (AQQEAQQASGEAGSA) are enriched in low complexity. Residues 602-617 (TVVDADYEVVDDEKRK) are compositionally biased toward acidic residues.

The protein belongs to the heat shock protein 70 family.

In terms of biological role, acts as a chaperone. The protein is Chaperone protein DnaK of Methanosarcina acetivorans (strain ATCC 35395 / DSM 2834 / JCM 12185 / C2A).